The sequence spans 53 residues: Small ribosomal subunit protein uS14 (53 aa).

Residues Cys17, Cys20, Cys36, and Cys39 each contribute to the Zn(2+) site.

This sequence belongs to the universal ribosomal protein uS14 family. Zinc-binding uS14 subfamily. As to quaternary structure, part of the 30S ribosomal subunit. Zn(2+) serves as cofactor.

Functionally, binds 16S rRNA, required for the assembly of 30S particles. The chain is Small ribosomal subunit protein uS14 from Methanococcus maripaludis (strain DSM 14266 / JCM 13030 / NBRC 101832 / S2 / LL).